The following is a 314-amino-acid chain: Putative glycosyltransferase ORF31 (314 aa).

This sequence belongs to the glycosyltransferase group 1 family.

This is Putative glycosyltransferase ORF31 from Haloarcula hispanica (His1V).